Consider the following 299-residue polypeptide: Cuticle collagen 34 (299 aa).

Residues 105–282 (PGPAGTPGKP…GSPGERGICP (178 aa)) are disordered. The segment covering 129-162 (PGRPPQQPCEPITPPPCKPCPQGPPGPPGPPGPP) has biased composition (pro residues). Residues 164 to 181 (DSGEPGSPGLPGQDAAPG) are compositionally biased toward low complexity. Composition is skewed to pro residues over residues 182–195 (EPGP…PGAP) and 215–233 (PGEP…PGSP). The interval 216–278 (GEPGPPGEAG…AGPPGSPGER (63 aa)) is triple-helical region. Low complexity predominate over residues 251 to 263 (NGPDGQPGADGNP). Residues 265-274 (APGPAGPPGS) show a composition bias toward pro residues.

The protein belongs to the cuticular collagen family. Collagen polypeptide chains are complexed within the cuticle by disulfide bonds and other types of covalent cross-links.

Nematode cuticles are composed largely of collagen-like proteins. The cuticle functions both as an exoskeleton and as a barrier to protect the worm from its environment. The protein is Cuticle collagen 34 (col-34) of Caenorhabditis elegans.